The chain runs to 80 residues: Clavanin-E (80 aa).

A signal peptide spans 1–19 (MKTTILILLILGLGINAKS). A propeptide spanning residues 20–29 (LEERKSEEEK) is cleaved from the precursor. A Phenylalanine amide modification is found at Phe-52. Residues 54–80 (DDQQDNGKFYGYYAEDNGKHWYDTGDQ) constitute a propeptide that is removed on maturation.

Its subcellular location is the secreted. Its function is as follows. Has antimicrobial activity. The polypeptide is Clavanin-E (Styela clava (Sea squirt)).